The chain runs to 220 residues: Peptide methionine sulfoxide reductase MsrA (220 aa).

Cys-59 is a catalytic residue.

It belongs to the MsrA Met sulfoxide reductase family.

The enzyme catalyses L-methionyl-[protein] + [thioredoxin]-disulfide + H2O = L-methionyl-(S)-S-oxide-[protein] + [thioredoxin]-dithiol. It carries out the reaction [thioredoxin]-disulfide + L-methionine + H2O = L-methionine (S)-S-oxide + [thioredoxin]-dithiol. In terms of biological role, has an important function as a repair enzyme for proteins that have been inactivated by oxidation. Catalyzes the reversible oxidation-reduction of methionine sulfoxide in proteins to methionine. The chain is Peptide methionine sulfoxide reductase MsrA from Corynebacterium kroppenstedtii (strain DSM 44385 / JCM 11950 / CIP 105744 / CCUG 35717).